The primary structure comprises 65 residues: Large ribosomal subunit protein bL35 (65 aa).

The segment at 1–46 is disordered; sequence MPKMKTRQSAAKRYEVTGSGKLRRRRAGKNHLLQHKSAARKRSLST. Residues 21 to 44 show a composition bias toward basic residues; the sequence is KLRRRRAGKNHLLQHKSAARKRSL.

The protein belongs to the bacterial ribosomal protein bL35 family.

The chain is Large ribosomal subunit protein bL35 from Gloeobacter violaceus (strain ATCC 29082 / PCC 7421).